Reading from the N-terminus, the 1020-residue chain is P3N-PIPO polyprotein (1020 aa).

The Peptidase S30 domain occupies 165 to 308; the sequence is RMSEASLQLF…KKQSNEIIHY (144 aa). Active-site for P1 proteinase activity residues include His216, Asp225, and Ser259. An Involved in interaction with stylet and aphid transmission motif is present at residues 360–363; the sequence is KITC. Residues 618-620 carry the Involved in virions binding and aphid transmission motif; sequence PTK. In terms of domain architecture, Peptidase C6 spans 644-766; sequence MFIAKAGYCY…DSNMKTYLVG (123 aa). Catalysis depends on for helper component proteinase activity residues Cys652 and His725.

This sequence belongs to the potyviridae P3N-PIPO polyprotein family. In terms of assembly, interacts (via PIPO domain) with host PCaP1 protein; this interaction may help to anchor the movement complex to the plasma membrane from which the complex could move to the plasmodesmata. Potyviral RNA is expressed as two polyproteins which undergo post-translational proteolytic processing. Genome polyprotein is processed by NIa-pro, P1 and HC-pro proteinases resulting in the production of at least ten individual proteins. P3N-PIPO is cleaved by P1 and HC-pro proteinases resulting in the production of three individual proteins. The P1 proteinase and the HC-pro cleave only their respective C-termini autocatalytically.

The protein resides in the host cell junction. It localises to the host plasmodesma. It carries out the reaction Hydrolyzes a Gly-|-Gly bond at its own C-terminus, commonly in the sequence -Tyr-Xaa-Val-Gly-|-Gly, in the processing of the potyviral polyprotein.. In terms of biological role, required for aphid transmission and also has proteolytic activity. Only cleaves a Gly-Gly dipeptide at its own C-terminus. Interacts with virions and aphid stylets. Acts as a suppressor of RNA-mediated gene silencing, also known as post-transcriptional gene silencing (PTGS), a mechanism of plant viral defense that limits the accumulation of viral RNAs. May have RNA-binding activity. Functionally, allows efficient cell to cell propagation, by bypassing the host cell wall barrier. Transports viral genome to neighboring plant cells directly through plasmosdesmata, without any budding. This chain is P3N-PIPO polyprotein, found in Plum pox potyvirus (isolate NAT) (PPV).